A 333-amino-acid chain; its full sequence is NADH-quinone oxidoreductase subunit H (333 aa).

Transmembrane regions (helical) follow at residues 15–35 (IALF…FVTY), 88–108 (YVLA…VLPF), 117–137 (IGVG…GVVA), 165–185 (LVMS…VDIV), 191–211 (VWFI…AVAE), 241–261 (FFML…TILF), 274–294 (IPGA…LIWF), and 313–333 (VLLP…AWFF).

It belongs to the complex I subunit 1 family. NDH-1 is composed of 14 different subunits. Subunits NuoA, H, J, K, L, M, N constitute the membrane sector of the complex.

It is found in the cell membrane. It carries out the reaction a quinone + NADH + 5 H(+)(in) = a quinol + NAD(+) + 4 H(+)(out). Functionally, NDH-1 shuttles electrons from NADH, via FMN and iron-sulfur (Fe-S) centers, to quinones in the respiratory chain. The immediate electron acceptor for the enzyme in this species is believed to be ubiquinone. Couples the redox reaction to proton translocation (for every two electrons transferred, four hydrogen ions are translocated across the cytoplasmic membrane), and thus conserves the redox energy in a proton gradient. This subunit may bind ubiquinone. The protein is NADH-quinone oxidoreductase subunit H of Geobacillus kaustophilus (strain HTA426).